Reading from the N-terminus, the 360-residue chain is Putative mRNA-decapping protein (360 aa).

Residues 11 to 28 (HICSNCGRSGHEFRNCIE) form a CCHC-type zinc finger. The Nudix hydrolase domain maps to 163–347 (YKYDNILYHF…KKRILTRVYL (185 aa)). The Nudix box signature appears at 242–264 (GRRDKRSEENMVCACREFEEETG). Mg(2+) is bound at residue E249. E258 acts as the Nucleophile in catalysis. Position 262 (E262) interacts with Mg(2+).

This sequence belongs to the Nudix hydrolase family. DIPP subfamily. Mg(2+) serves as cofactor. The cofactor is Mn(2+).

The enzyme catalyses diphospho-myo-inositol polyphosphate + H2O = myo-inositol polyphosphate + phosphate.. Its function is as follows. Might function as a decapping enzyme required for the removal of the 5'-end m7GpppN cap tethered to viral and host mRNAs to allow their decay in cells. In addition to the mRNA cap, probably also efficiently hydrolyzes diphosphoinositol polyphosphates. The polypeptide is Putative mRNA-decapping protein (Acanthamoeba polyphaga (Amoeba)).